We begin with the raw amino-acid sequence, 765 residues long: E3 ubiquitin-protein ligase SMURF2 (765 aa).

The C2 domain maps to 1-117; that stretch reads MSNQGVRRNG…KDTGYQRLDL (117 aa). WW domains are found at residues 157-190, 251-284, and 297-330; these read NDLPDGWEERRTASGRIQYLNHITRSTQWERPTR, PDLPEGYEQRTTQQGQVYFLHTQTGVSTWHDPRV, and GPLPPGWEIRNTATGRVYFVDHNNRTTQFTDPRL. The interval 341-375 is disordered; that stretch reads SPNGSRAAVEAQSSSRPGQLKEQAQSVVSPGNLPE. The span at 351–369 shows a compositional bias: polar residues; it reads AQSSSRPGQLKEQAQSVVS. One can recognise an HECT domain in the interval 431–765; that stretch reads RPKDLWKRLM…IEETCGFAVE (335 aa). Catalysis depends on cysteine 733, which acts as the Glycyl thioester intermediate.

It is found in the nucleus. The protein resides in the cytoplasm. Its subcellular location is the cell membrane. It localises to the membrane raft. The catalysed reaction is S-ubiquitinyl-[E2 ubiquitin-conjugating enzyme]-L-cysteine + [acceptor protein]-L-lysine = [E2 ubiquitin-conjugating enzyme]-L-cysteine + N(6)-ubiquitinyl-[acceptor protein]-L-lysine.. It functions in the pathway protein modification; protein ubiquitination. Its function is as follows. E3 ubiquitin-protein ligase which accepts ubiquitin from an E2 ubiquitin-conjugating enzyme in the form of a thioester and then directly transfers the ubiquitin to targeted substrates. The chain is E3 ubiquitin-protein ligase SMURF2 (smurf2) from Danio rerio (Zebrafish).